Reading from the N-terminus, the 119-residue chain is QDWSSFQNKHIDYPETSASNPNAYCDLMMQRRNLNPTKCKTRNTFVHASPSEIQQVCGSGGTHYEDNLYDSNESFDLTDCKNVGGTAPSSCKYNGTPGTKRIRIACENNQPVHFELVLS.

Position 1 is a pyrrolidone carboxylic acid (Gln1). His10 serves as the catalytic Proton acceptor. 3 disulfide bridges follow: Cys25-Cys80, Cys39-Cys91, and Cys57-Cys106. A substrate-binding site is contributed by 40 to 44 (KTRNT). His113 (proton donor) is an active-site residue.

It belongs to the pancreatic ribonuclease family. As to quaternary structure, monomer. Interacts with and forms tight 1:1 complexes with RNH1. Dimerization of two such complexes may occur. Interaction with RNH1 inhibits this protein. As to expression, pancreas.

The protein localises to the secreted. The catalysed reaction is an [RNA] containing cytidine + H2O = an [RNA]-3'-cytidine-3'-phosphate + a 5'-hydroxy-ribonucleotide-3'-[RNA].. It carries out the reaction an [RNA] containing uridine + H2O = an [RNA]-3'-uridine-3'-phosphate + a 5'-hydroxy-ribonucleotide-3'-[RNA].. In terms of biological role, endonuclease that catalyzes the cleavage of RNA on the 3' side of pyrimidine nucleotides. Acts on single-stranded and double-stranded RNA. The chain is Ribonuclease pancreatic from Iguana iguana (Common iguana).